Consider the following 246-residue polypeptide: E3 ubiquitin-protein ligase MARCHF2 (246 aa).

The segment at 56–116 (DSQSDCPFCR…ELCHTEFAVE (61 aa)) adopts an RING-CH-type zinc-finger fold. Positions 64, 67, 80, 82, 90, 93, 106, and 109 each coordinate Zn(2+). A required for interaction with IKBKG region spans residues 121 to 246 (PLTEWLKDPG…LKKVAEETPV (126 aa)). The next 2 helical transmembrane spans lie at 138-158 (LCCD…SGWL) and 175-195 (AVGL…WTLV).

In terms of assembly, interacts with STX6; the interaction promotes MARCHF2-mediated ubiquitination and degradation of CFTR. Interacts with MARCHF3. Interacts with GOPC/CAL; the interaction leads to CFTR ubiquitination and degradation. Interacts with CFTR; the interaction leads to CFTR ubiqtuitination and degradation. Interacts (via PDZ domain) with DLG1 (via PDZ domains); the interaction leads to DLG1 ubiqtuitination and degradation. Interacts with ERGIC3. Interacts with ADRB2. Interacts with IKBKG/NEMO; during the late stages of macrophage viral and bacterial infection; the interaction leads to ubiquitination and degradation of IKBKG/NEMO.

It localises to the endoplasmic reticulum membrane. The protein localises to the lysosome membrane. It is found in the endosome membrane. Its subcellular location is the golgi apparatus membrane. The protein resides in the cytoplasm. It localises to the cell membrane. It carries out the reaction S-ubiquitinyl-[E2 ubiquitin-conjugating enzyme]-L-cysteine + [acceptor protein]-L-lysine = [E2 ubiquitin-conjugating enzyme]-L-cysteine + N(6)-ubiquitinyl-[acceptor protein]-L-lysine.. The protein operates within protein modification; protein ubiquitination. In terms of biological role, E3 ubiquitin-protein ligase that may mediate ubiquitination of TFRC and CD86, and promote their subsequent endocytosis and sorting to lysosomes via multivesicular bodies. E3 ubiquitin ligases accept ubiquitin from an E2 ubiquitin-conjugating enzyme in the form of a thioester and then directly transfer the ubiquitin to targeted substrates. Together with GOPC/CAL mediates the ubiquitination and lysosomal degradation of CFTR. Ubiquitinates and therefore mediates the degradation of DLG1. Regulates the intracellular trafficking and secretion of alpha1-antitrypsin/SERPINA1 and HP/haptoglobin via ubiquitination and degradation of the cargo receptor ERGIC3. Negatively regulates the antiviral and antibacterial immune response by repression of the NF-kB and type 1 IFN signaling pathways, via MARCHF2-mediated K48-linked polyubiquitination of IKBKG/NEMO, resulting in its proteasomal degradation. May be involved in endosomal trafficking through interaction with STX6. The polypeptide is E3 ubiquitin-protein ligase MARCHF2 (Marchf2) (Mus musculus (Mouse)).